A 212-amino-acid polypeptide reads, in one-letter code: MNSLSTSAFSPVAFSLGLLLVMATAFPTPERLEEDAKGDATSDKMLFTSPDKTEELIKYILGKISAMRKEMCEKYEKCENSKEVLAENNLNLPKMAEKDGCFQSGFNQETCLMRITTGLVEFQIYLDYLQKEYESNKGNVEAVQISTKALIQTLRQKGKNPDKATTPNPTTNAGLLDKLQSQNEWMKNTKIILILRSLEDFLQFSLRAIRIM.

Positions 1–29 (MNSLSTSAFSPVAFSLGLLLVMATAFPTP) are cleaved as a signal peptide. A disulfide bond links cysteine 72 and cysteine 78. Residue serine 81 is modified to Phosphoserine. Cysteine 101 and cysteine 111 form a disulfide bridge. A disordered region spans residues 156-175 (QKGKNPDKATTPNPTTNAGL). Over residues 163-175 (KATTPNPTTNAGL) the composition is skewed to polar residues.

Belongs to the IL-6 superfamily. In terms of assembly, component of a hexamer of two molecules each of IL6, IL6R and IL6ST; first binds to IL6R to associate with the signaling subunit IL6ST. Interacts with IL6R (via the N-terminal ectodomain); this interaction may be affected by IL6R-binding with SORL1, hence decreasing IL6 cis signaling. Interacts with SORL1 (via the N-terminal ectodomain); this interaction leads to IL6 internalization and lysosomal degradation. May form a trimeric complex with the soluble SORL1 ectodomain and soluble IL6R receptor; this interaction might stabilize circulating IL6, hence promoting IL6 trans signaling.

The protein localises to the secreted. Cytokine with a wide variety of biological functions in immunity, tissue regeneration, and metabolism. Binds to IL6R, then the complex associates to the signaling subunit IL6ST/gp130 to trigger the intracellular IL6-signaling pathway. The interaction with the membrane-bound IL6R and IL6ST stimulates 'classic signaling', whereas the binding of IL6 and soluble IL6R to IL6ST stimulates 'trans-signaling'. Alternatively, 'cluster signaling' occurs when membrane-bound IL6:IL6R complexes on transmitter cells activate IL6ST receptors on neighboring receiver cells. Its function is as follows. IL6 is a potent inducer of the acute phase response. Rapid production of IL6 contributes to host defense during infection and tissue injury, but excessive IL6 synthesis is involved in disease pathology. In the innate immune response, is synthesized by myeloid cells, such as macrophages and dendritic cells, upon recognition of pathogens through toll-like receptors (TLRs) at the site of infection or tissue injury. In the adaptive immune response, is required for the differentiation of B cells into immunoglobulin-secreting cells. Plays a major role in the differentiation of CD4(+) T cell subsets. Essential factor for the development of T follicular helper (Tfh) cells that are required for the induction of germinal-center formation. Required to drive naive CD4(+) T cells to the Th17 lineage. Also required for proliferation of myeloma cells and the survival of plasmablast cells. In terms of biological role, acts as an essential factor in bone homeostasis and on vessels directly or indirectly by induction of VEGF, resulting in increased angiogenesis activity and vascular permeability. Induces, through 'trans-signaling' and synergistically with IL1B and TNF, the production of VEGF. Involved in metabolic controls, is discharged into the bloodstream after muscle contraction increasing lipolysis and improving insulin resistance. 'Trans-signaling' in central nervous system also regulates energy and glucose homeostasis. Mediates, through GLP-1, crosstalk between insulin-sensitive tissues, intestinal L cells and pancreatic islets to adapt to changes in insulin demand. Also acts as a myokine. Plays a protective role during liver injury, being required for maintenance of tissue regeneration. Also has a pivotal role in iron metabolism by regulating HAMP/hepcidin expression upon inflammation or bacterial infection. Through activation of IL6ST-YAP-NOTCH pathway, induces inflammation-induced epithelial regeneration. This chain is Interleukin-6 (IL6), found in Sus scrofa (Pig).